Here is a 356-residue protein sequence, read N- to C-terminus: Peptide chain release factor 1 (356 aa).

Glutamine 233 carries the N5-methylglutamine modification.

The protein belongs to the prokaryotic/mitochondrial release factor family. Methylated by PrmC. Methylation increases the termination efficiency of RF1.

It localises to the cytoplasm. Peptide chain release factor 1 directs the termination of translation in response to the peptide chain termination codons UAG and UAA. This is Peptide chain release factor 1 from Symbiobacterium thermophilum (strain DSM 24528 / JCM 14929 / IAM 14863 / T).